The following is a 215-amino-acid chain: Large ribosomal subunit protein uL3 (215 aa).

Gln-156 carries the N5-methylglutamine modification.

The protein belongs to the universal ribosomal protein uL3 family. As to quaternary structure, part of the 50S ribosomal subunit. Forms a cluster with proteins L14 and L19. Methylated by PrmB.

In terms of biological role, one of the primary rRNA binding proteins, it binds directly near the 3'-end of the 23S rRNA, where it nucleates assembly of the 50S subunit. This is Large ribosomal subunit protein uL3 from Xylella fastidiosa (strain M12).